The chain runs to 358 residues: MGEKGCESCREWQEHCYREHMDVSRIRFFRLMTGDFAHGISIPEKVADRFSGQITKGFNLKAPSGETWRVSVEKVADELILMSGWEDFAKAHELQENDLLFFTCNGRCNGSFSFDVLIFDASGCEKVSCFFIGKKNSIGGQTQNAEQYHLSDSEDTSTPSTFLVGSPHKASTSKKLNGKTKTNPRKEPEDPNSSRSHVKHEMIEEEKSDDDDEHADYEHADYYYSRFANYLTGEEREEIFSLVSLQPGNPVFVTVLQAPQIHRKGLLIVPSGFAADHLDSRSQEILLMRPNKKEKWYVKYYHASTTRGFNCQRWIKFIRENRLREGYICIFELMKGARRVTMTVHVIGKVDDRFVLLG.

The segment at residues 25-122 is a DNA-binding region (TF-B3 1); the sequence is RIRFFRLMTG…SFDVLIFDAS (98 aa). Residues 148–215 form a disordered region; it reads YHLSDSEDTS…EKSDDDDEHA (68 aa). Polar residues predominate over residues 156-181; it reads TSTPSTFLVGSPHKASTSKKLNGKTK. Over residues 203 to 215 the composition is skewed to acidic residues; it reads IEEEKSDDDDEHA. Positions 252–350 form a DNA-binding region, TF-B3 2; that stretch reads FVTVLQAPQI…TMTVHVIGKV (99 aa).

Its subcellular location is the nucleus. The chain is B3 domain-containing protein Os12g0592300 from Oryza sativa subsp. japonica (Rice).